Reading from the N-terminus, the 107-residue chain is Thioredoxin (107 aa).

The Thioredoxin domain maps to 2–107; sequence SVEAVVKQVD…GIRELIQANA (106 aa). Active-site nucleophile residues include Cys34 and Cys37. An intrachain disulfide couples Cys34 to Cys37.

Belongs to the thioredoxin family.

Participates in various redox reactions through the reversible oxidation of its active center dithiol to a disulfide and catalyzes dithiol-disulfide exchange reactions. The protein is Thioredoxin (TRX) of Echinococcus granulosus (Hydatid tapeworm).